The primary structure comprises 203 residues: Outer-membrane lipoprotein carrier protein (203 aa).

Residues 1–21 (MKKLIISCCLLATFSAAGAWA) form the signal peptide. Residues 174–203 (ALKSQQSGPISADKFKFRPPKGVTVDDQRQ) form a disordered region.

The protein belongs to the LolA family. In terms of assembly, monomer.

The protein localises to the periplasm. Functionally, participates in the translocation of lipoproteins from the inner membrane to the outer membrane. Only forms a complex with a lipoprotein if the residue after the N-terminal Cys is not an aspartate (The Asp acts as a targeting signal to indicate that the lipoprotein should stay in the inner membrane). The sequence is that of Outer-membrane lipoprotein carrier protein from Erwinia tasmaniensis (strain DSM 17950 / CFBP 7177 / CIP 109463 / NCPPB 4357 / Et1/99).